Here is a 415-residue protein sequence, read N- to C-terminus: Ornithine cyclodeaminase (415 aa).

Positions 241, 242, 320, 352, 354, 355, 373, 396, and 397 each coordinate NAD(+).

The protein belongs to the AgrE/ArgZ ornithine cyclodeaminase family. Requires NAD(+) as cofactor.

It catalyses the reaction L-ornithine = L-proline + NH4(+). In terms of biological role, catalyzes the conversion of ornithine to proline, with the release of ammonia. In Methanococcus maripaludis (strain DSM 14266 / JCM 13030 / NBRC 101832 / S2 / LL), this protein is Ornithine cyclodeaminase.